The primary structure comprises 638 residues: Adhesion G-protein coupled receptor F2 (638 aa).

An N-terminal signal peptide occupies residues 1–25; it reads MISARWLYCLVLLLATESCRLFCQA. Residues 26 to 386 lie on the Extracellular side of the membrane; that stretch reads ASKSKENVMP…ESPVLTYITY (361 aa). N155, N219, N248, N293, and N311 each carry an N-linked (GlcNAc...) asparagine glycan. Residues 233 to 377 enclose the GAIN-B domain; it reads PRNSLGKNFT…SILMSPNTVE (145 aa). 2 cysteine pairs are disulfide-bonded: C329-C356 and C344-C358. Residues 329–377 are GPS; it reads CVGWHSLESRWDRRACKMIQENSRQAICRCQPNKFFTSFSILMSPNTVE. The chain crosses the membrane as a helical span at residues 387 to 407; the sequence is IGLGISICSLIICLAIEALVW. At 408 to 422 the chain is on the cytoplasmic side; that stretch reads SQVTKTEISYLRHLC. A helical membrane pass occupies residues 423-443; the sequence is IANIAVTLLMADVWFIVASFL. The Extracellular portion of the chain corresponds to 444 to 465; sequence SGPIVHHNGCVTATFFVHFFYL. Residues 466-486 traverse the membrane as a helical segment; that stretch reads SVFFWMLAKALLILYGILIVF. The Cytoplasmic portion of the chain corresponds to 487–493; it reads HTLPKSC. A helical transmembrane segment spans residues 494 to 514; sequence LVASLFTVGYGCPLVIAVITL. Over 515-541 the chain is Extracellular; the sequence is AVTEPGKGYLRPEACWLNWDMTKALLA. A helical transmembrane segment spans residues 542-562; it reads FVVPALAIVVVNLITVTLVII. Residues 563–586 are Cytoplasmic-facing; that stretch reads KTQRAAVGSSMFQEVRAIVRICKN. A helical membrane pass occupies residues 587-607; sequence IAILTPLLGLTWGFGIATVVA. The Extracellular segment spans residues 608–610; the sequence is GHS. The helical transmembrane segment at 611 to 631 threads the bilayer; the sequence is LAFHIIFSLLNALQVSPDAMI. At 632–638 the chain is on the cytoplasmic side; it reads ESEWRGC.

It belongs to the G-protein coupled receptor 2 family. Adhesion G-protein coupled receptor (ADGR) subfamily.

It localises to the membrane. Its function is as follows. Orphan receptor. The sequence is that of Adhesion G-protein coupled receptor F2 (Adgrf2) from Rattus norvegicus (Rat).